The primary structure comprises 727 residues: Adhesion G protein-coupled receptor L4 (727 aa).

A signal peptide spans 1–19; sequence MKLLLFAAWFSSLLDPCRF. Topologically, residues 20 to 467 are extracellular; that stretch reads LDICQSCHPN…LAHYNVLTRI (448 aa). Residues 52-90 enclose the EGF-like 1; calcium-binding domain; that stretch reads DDNECETVPEICGLHANCTNYVGGYYCNCLSGFISNGTE. 6 disulfides stabilise this stretch: Cys56–Cys69, Cys63–Cys78, Cys106–Cys118, Cys112–Cys127, Cys408–Cys438, and Cys426–Cys440. In terms of domain architecture, EGF-like 2; calcium-binding spans 102–139; it reads DINECEEDRKCGPNSKCHNNIGSFICSCLRGYTSPAGP. Residues 282-456 form the GAIN-B domain; sequence TQMQVHAGDV…AILMSSARAN (175 aa). A GPS region spans residues 408 to 456; that stretch reads CAFWEYSPSMMGHWSLDGCIRTRVNTTHTSCSCNHLTHFAILMSSARAN. The helical transmembrane segment at 468–488 threads the bilayer; the sequence is TQLGMVISLICLSMCIFTFWF. The Cytoplasmic portion of the chain corresponds to 489-496; that stretch reads FRDIQNTR. Residues 497–517 form a helical membrane-spanning segment; sequence TTIHKNLCCSLFMAQFIFLIG. Over 518–535 the chain is Extracellular; it reads INKSAHKWFCSLIAGLLH. The helical transmembrane segment at 536–556 threads the bilayer; the sequence is YFFLAAFAWMCIEGIHLYLIV. At 557–568 the chain is on the cytoplasmic side; it reads VGVIYNKGFLHR. The chain crosses the membrane as a helical span at residues 569–589; sequence NFYAFGYGSPAVVVAISATLG. Residues 590 to 609 are Extracellular-facing; the sequence is YKYYGTSSVCWLSTENNFIW. The helical transmembrane segment at 610-630 threads the bilayer; sequence SFIGPAILIILVNLLAFAVII. The Cytoplasmic segment spans residues 631 to 654; it reads YKVYRHTAVKKPEISHYENIRSCA. Residues 655–675 traverse the membrane as a helical segment; the sequence is RGAIALLFVLGVTWAFGVMYI. The Extracellular segment spans residues 676–682; it reads LYETTLT. The helical transmembrane segment at 683-703 threads the bilayer; that stretch reads AYLFTFANVFQGMFIFIFLCV.

The protein belongs to the G-protein coupled receptor 2 family. Adhesion G-protein coupled receptor (ADGR) subfamily. As to quaternary structure, heterodimer of 2 chains generated by proteolytic processing; the large extracellular N-terminal fragment and the membrane-bound C-terminal fragment predominantly remain associated and non-covalently linked. In terms of processing, autoproteolytically processed at the GPS region of the GAIN-B domain; this cleavage modulates receptor activity.

Its subcellular location is the cell membrane. Functionally, orphan receptor that plays a role in vessel formation. The chain is Adhesion G protein-coupled receptor L4 from Danio rerio (Zebrafish).